A 527-amino-acid polypeptide reads, in one-letter code: Putative GTP-binding protein 6 (527 aa).

Residues P306 to T470 enclose the Hflx-type G domain. Residues G312–T319, F338–D342, D360–G363, N429–D432, and S448–L450 contribute to the GTP site. T319 and T340 together coordinate Mg(2+).

It belongs to the TRAFAC class OBG-HflX-like GTPase superfamily. HflX GTPase family. Mg(2+) serves as cofactor.

This chain is Putative GTP-binding protein 6 (gtpbp6), found in Xenopus laevis (African clawed frog).